A 304-amino-acid chain; its full sequence is Putative S-adenosyl-L-methionine-dependent methyltransferase MAV_4444 (304 aa).

Residues Asp130 and 159–160 (DL) contribute to the S-adenosyl-L-methionine site.

Belongs to the UPF0677 family.

Its function is as follows. Exhibits S-adenosyl-L-methionine-dependent methyltransferase activity. This Mycobacterium avium (strain 104) protein is Putative S-adenosyl-L-methionine-dependent methyltransferase MAV_4444.